The chain runs to 467 residues: Glutamate--tRNA ligase 1 (467 aa).

Positions proline 8 to glycine 18 match the 'HIGH' region motif. The 'KMSKS' region motif lies at proline 230–arginine 234. Lysine 233 serves as a coordination point for ATP.

The protein belongs to the class-I aminoacyl-tRNA synthetase family. Glutamate--tRNA ligase type 1 subfamily. Monomer.

It localises to the cytoplasm. It catalyses the reaction tRNA(Glu) + L-glutamate + ATP = L-glutamyl-tRNA(Glu) + AMP + diphosphate. Catalyzes the attachment of glutamate to tRNA(Glu) in a two-step reaction: glutamate is first activated by ATP to form Glu-AMP and then transferred to the acceptor end of tRNA(Glu). The protein is Glutamate--tRNA ligase 1 of Petrotoga mobilis (strain DSM 10674 / SJ95).